Consider the following 222-residue polypeptide: LexA repressor (222 aa).

Positions Ile28 to Lys48 form a DNA-binding region, H-T-H motif. Active-site for autocatalytic cleavage activity residues include Ser135 and Lys172.

This sequence belongs to the peptidase S24 family. As to quaternary structure, homodimer.

It carries out the reaction Hydrolysis of Ala-|-Gly bond in repressor LexA.. In terms of biological role, represses a number of genes involved in the response to DNA damage (SOS response), including recA and lexA. In the presence of single-stranded DNA, RecA interacts with LexA causing an autocatalytic cleavage which disrupts the DNA-binding part of LexA, leading to derepression of the SOS regulon and eventually DNA repair. The chain is LexA repressor from Myxococcus xanthus (strain DK1622).